We begin with the raw amino-acid sequence, 189 residues long: Small ribosomal subunit protein uS5 (189 aa).

Residues 20–83 (FMDRLVHINR…ESAKRSLIRV (64 aa)) form the S5 DRBM domain.

It belongs to the universal ribosomal protein uS5 family. In terms of assembly, part of the 30S ribosomal subunit. Contacts proteins S4 and S8.

In terms of biological role, with S4 and S12 plays an important role in translational accuracy. Its function is as follows. Located at the back of the 30S subunit body where it stabilizes the conformation of the head with respect to the body. The chain is Small ribosomal subunit protein uS5 from Methylocella silvestris (strain DSM 15510 / CIP 108128 / LMG 27833 / NCIMB 13906 / BL2).